We begin with the raw amino-acid sequence, 259 residues long: Diaminopimelate epimerase (259 aa).

Substrate-binding residues include Asn-14, Gln-42, and Asn-60. Cys-69 acts as the Proton donor in catalysis. Substrate contacts are provided by residues 70-71 (GN), Asn-151, Asn-184, and 202-203 (ER). Catalysis depends on Cys-211, which acts as the Proton acceptor. Residue 212–213 (GS) participates in substrate binding.

The protein belongs to the diaminopimelate epimerase family. As to quaternary structure, homodimer.

The protein localises to the cytoplasm. It carries out the reaction (2S,6S)-2,6-diaminopimelate = meso-2,6-diaminopimelate. It functions in the pathway amino-acid biosynthesis; L-lysine biosynthesis via DAP pathway; DL-2,6-diaminopimelate from LL-2,6-diaminopimelate: step 1/1. Its function is as follows. Catalyzes the stereoinversion of LL-2,6-diaminopimelate (L,L-DAP) to meso-diaminopimelate (meso-DAP), a precursor of L-lysine and an essential component of the bacterial peptidoglycan. In Wolbachia sp. subsp. Brugia malayi (strain TRS), this protein is Diaminopimelate epimerase.